The chain runs to 677 residues: Pro-neuregulin-1, membrane-bound isoform (677 aa).

Over residues 1 to 12 the composition is skewed to basic and acidic residues; that stretch reads MAEKKKVKEGKG. Disordered stretches follow at residues 1-43 and 78-106; these read MAEK…KEIK and GAKNKPDSKPEHIKIRGKKKSSELQISKA. Residues 1 to 260 are Extracellular-facing; that stretch reads MAEKKKVKEG…MEAEELYQKR (260 aa). Basic residues predominate over residues 13–24; that stretch reads RKGKGKKDRKGK. The Ig-like C2-type domain occupies 37–132; that stretch reads PKLKEIKTQS…GNDTVTVNVT (96 aa). An intrachain disulfide couples Cys-57 to Cys-116. The span at 78–91 shows a compositional bias: basic and acidic residues; sequence GAKNKPDSKPEHIK. N-linked (GlcNAc...) asparagine glycosylation is found at Asn-124 and Asn-130. The region spanning 188 to 232 is the EGF-like domain; sequence HLIKCSDKEKTYCVNGGECYVLNGITSSNQFMCKCKPGFTGARCT. Intrachain disulfides connect Cys-192–Cys-206, Cys-200–Cys-220, and Cys-222–Cys-231. A helical transmembrane segment spans residues 261–280; that stretch reads VLTITGICIDLLVVGDMCVV. Residues 281–677 are Cytoplasmic-facing; it reads DAYCKTKKQR…RKMTCKTLFI (397 aa). Over residues 294 to 315 the composition is skewed to basic and acidic residues; sequence NDRLRQSLRERNKNITNKDNRP. 5 disordered regions span residues 294–326, 350–375, 397–418, 457–479, and 503–617; these read NDRLRQSLRERNKNITNKDNRPHNPKNPPPRKN, ETSFSTSHYTSTTHHSTTVTQTPSHS, SVENSRHTSPTGPRGRLNGIGG, VEFKTPISPKSPCLETSPPESSL, and PPRL…FLSI. The segment covering 351–375 has biased composition (low complexity); the sequence is TSFSTSHYTSTTHHSTTVTQTPSHS. Residues 397–407 are compositionally biased toward polar residues; sequence SVENSRHTSPT. A compositionally biased stretch (basic and acidic residues) spans 505–515; it reads RLREKRYDRKT. Positions 568–578 are enriched in basic residues; the sequence is VNSRRQKRTKP. Residues 591–600 are compositionally biased toward low complexity; the sequence is DSSSESSTSE.

Belongs to the neuregulin family. Proteolytic cleavage close to the plasma membrane on the external face leads to the release of the soluble growth factor form. In terms of processing, extensive glycosylation precedes the proteolytic cleavage. Isoform alpha1 is expressed in brain and muscle. Isoform CRD is expressed in brain and spinal cord, but at very low level in muscle.

Its subcellular location is the cell membrane. The protein resides in the secreted. Its function is as follows. Direct ligand for the ERBB tyrosine kinase receptors. Induces expression of acetylcholine receptor in synaptic nuclei. This chain is Pro-neuregulin-1, membrane-bound isoform (nrg1), found in Xenopus laevis (African clawed frog).